The primary structure comprises 251 residues: MEKTRKDVCVPRHVAIIMDGNNRWAKKRLLPGVAGHKAGVDAVRAVIEVCAEAGVEVLTLFAFSSENWQRPADEVSALMELFLVALRREVRKLDENGIRLRIIGDRTRFHPELQAAMREAEAATAGNTRFLLQVAANYGGQWDIVQAAQRLAREVQGGHLAADDISAELLQGCLVTGDQPLPDLCIRTGGEHRISNFLLWQLAYAELYFSDLFWPDFKHAAMRAALADFSKRQRRFGKTSEQVEAEARPSC.

Asp-19 is a catalytic residue. Asp-19 lines the Mg(2+) pocket. Residues 20–23 (GNNR), Trp-24, His-36, and 64–66 (SSE) each bind substrate. Catalysis depends on Asn-67, which acts as the Proton acceptor. Residues Trp-68, Arg-70, Arg-187, and 193 to 195 (RIS) contribute to the substrate site. Glu-206 lines the Mg(2+) pocket.

The protein belongs to the UPP synthase family. As to quaternary structure, homodimer. Mg(2+) is required as a cofactor.

The enzyme catalyses 8 isopentenyl diphosphate + (2E,6E)-farnesyl diphosphate = di-trans,octa-cis-undecaprenyl diphosphate + 8 diphosphate. Its function is as follows. Catalyzes the sequential condensation of isopentenyl diphosphate (IPP) with (2E,6E)-farnesyl diphosphate (E,E-FPP) to yield (2Z,6Z,10Z,14Z,18Z,22Z,26Z,30Z,34E,38E)-undecaprenyl diphosphate (di-trans,octa-cis-UPP). UPP is the precursor of glycosyl carrier lipid in the biosynthesis of bacterial cell wall polysaccharide components such as peptidoglycan and lipopolysaccharide. This Pseudomonas aeruginosa (strain ATCC 15692 / DSM 22644 / CIP 104116 / JCM 14847 / LMG 12228 / 1C / PRS 101 / PAO1) protein is Ditrans,polycis-undecaprenyl-diphosphate synthase ((2E,6E)-farnesyl-diphosphate specific).